The primary structure comprises 186 residues: Protein GrpE (186 aa).

Polar residues predominate over residues 1–15 (MADEQQTLDQQTPEQ). The segment at 1 to 20 (MADEQQTLDQQTPEQPTGAA) is disordered.

It belongs to the GrpE family. As to quaternary structure, homodimer.

It is found in the cytoplasm. In terms of biological role, participates actively in the response to hyperosmotic and heat shock by preventing the aggregation of stress-denatured proteins, in association with DnaK and GrpE. It is the nucleotide exchange factor for DnaK and may function as a thermosensor. Unfolded proteins bind initially to DnaJ; upon interaction with the DnaJ-bound protein, DnaK hydrolyzes its bound ATP, resulting in the formation of a stable complex. GrpE releases ADP from DnaK; ATP binding to DnaK triggers the release of the substrate protein, thus completing the reaction cycle. Several rounds of ATP-dependent interactions between DnaJ, DnaK and GrpE are required for fully efficient folding. This is Protein GrpE from Pseudomonas aeruginosa (strain LESB58).